The sequence spans 388 residues: Ferrochelatase (388 aa).

The Fe cation site is built by His196 and Glu277.

It belongs to the ferrochelatase family.

The protein localises to the cytoplasm. It carries out the reaction heme b + 2 H(+) = protoporphyrin IX + Fe(2+). Its pathway is porphyrin-containing compound metabolism; protoheme biosynthesis; protoheme from protoporphyrin-IX: step 1/1. Functionally, catalyzes the ferrous insertion into protoporphyrin IX. This is Ferrochelatase from Nostoc sp. (strain PCC 7120 / SAG 25.82 / UTEX 2576).